The chain runs to 417 residues: Glutamyl-tRNA(Gln) amidotransferase subunit D (417 aa).

An Asparaginase/glutaminase domain is found at 73–400 (EKVWLLATGG…EEVPRVLTTP (328 aa)). Catalysis depends on residues Thr83, Thr157, Asp158, and Lys236.

It belongs to the asparaginase 1 family. GatD subfamily. In terms of assembly, heterodimer of GatD and GatE.

The catalysed reaction is L-glutamyl-tRNA(Gln) + L-glutamine + ATP + H2O = L-glutaminyl-tRNA(Gln) + L-glutamate + ADP + phosphate + H(+). Allows the formation of correctly charged Gln-tRNA(Gln) through the transamidation of misacylated Glu-tRNA(Gln) in organisms which lack glutaminyl-tRNA synthetase. The reaction takes place in the presence of glutamine and ATP through an activated gamma-phospho-Glu-tRNA(Gln). The GatDE system is specific for glutamate and does not act on aspartate. The polypeptide is Glutamyl-tRNA(Gln) amidotransferase subunit D (Pyrobaculum aerophilum (strain ATCC 51768 / DSM 7523 / JCM 9630 / CIP 104966 / NBRC 100827 / IM2)).